The following is a 142-amino-acid chain: Large ribosomal subunit protein uL11 (142 aa).

It belongs to the universal ribosomal protein uL11 family. In terms of assembly, part of the ribosomal stalk of the 50S ribosomal subunit. Interacts with L10 and the large rRNA to form the base of the stalk. L10 forms an elongated spine to which L12 dimers bind in a sequential fashion forming a multimeric L10(L12)X complex. In terms of processing, one or more lysine residues are methylated.

Forms part of the ribosomal stalk which helps the ribosome interact with GTP-bound translation factors. This is Large ribosomal subunit protein uL11 from Mycobacterium tuberculosis (strain ATCC 25177 / H37Ra).